A 275-amino-acid chain; its full sequence is Octanoyl-[GcvH]:protein N-octanoyltransferase (275 aa).

A BPL/LPL catalytic domain is found at 42 to 246 (GQSQPVVRLW…ALQAFGSRLE (205 aa)). The Acyl-thioester intermediate role is filled by Cys145.

It belongs to the octanoyltransferase LipL family.

It carries out the reaction N(6)-octanoyl-L-lysyl-[glycine-cleavage complex H protein] + L-lysyl-[lipoyl-carrier protein] = N(6)-octanoyl-L-lysyl-[lipoyl-carrier protein] + L-lysyl-[glycine-cleavage complex H protein]. It participates in protein modification; protein lipoylation via endogenous pathway; protein N(6)-(lipoyl)lysine from octanoyl-[acyl-carrier-protein]. Functionally, catalyzes the amidotransfer (transamidation) of the octanoyl moiety from octanoyl-GcvH to the lipoyl domain of the E2 subunit of lipoate-dependent enzymes. The chain is Octanoyl-[GcvH]:protein N-octanoyltransferase from Anoxybacillus flavithermus (strain DSM 21510 / WK1).